Reading from the N-terminus, the 777-residue chain is Beta-hexosaminidase (777 aa).

The signal sequence occupies residues 1-18; the sequence is MKRLTFGACICCLLSLMA. A lipid anchor (N-palmitoyl cysteine) is attached at Cys-19. Cys-19 carries S-diacylglycerol cysteine lipidation. The region spanning 625-766 is the PA14 domain; the sequence is APKPGLTIRT…VMIRLKGEEK (142 aa).

This sequence belongs to the glycosyl hydrolase 20 family.

It localises to the cell outer membrane. The catalysed reaction is Hydrolysis of terminal non-reducing N-acetyl-D-hexosamine residues in N-acetyl-beta-D-hexosaminides.. This Porphyromonas gingivalis (strain ATCC BAA-308 / W83) protein is Beta-hexosaminidase (nahA).